The chain runs to 303 residues: Cyclin-dependent kinase 4 (303 aa).

N-acetylalanine is present on Ala2. Positions 6–295 (YEPVAEIGVG…AFRALQHSYL (290 aa)) constitute a Protein kinase domain. ATP contacts are provided by residues 12 to 20 (IGVGAYGTV) and Lys35. A required for binding D-type cyclins region spans residues 50-56 (PISTVRE). Asp140 functions as the Proton acceptor in the catalytic mechanism. At Thr172 the chain carries Phosphothreonine; by CAK.

Belongs to the protein kinase superfamily. CMGC Ser/Thr protein kinase family. CDC2/CDKX subfamily. In terms of assembly, component of the D-CDK4 complex, composed of CDK4 and some D-type G1 cyclin (CCND1, CCND2 or CCND3). Interacts directly in the complex with CCND1, CCND2 or CCND3. Interacts with SEI1 and ZNF655. Forms a ternary complex, cyclin D-CDK4-CDKN1B, involved in modulating CDK4 enzymatic activity. Interacts directly with CDKN1B (phosphorylated on 'Tyr-88' and 'Tyr-89'); the interaction allows assembly of the cyclin D-CDK4 complex, Thr-172 phosphorylation, nuclear translocation and enhances the cyclin D-CDK4 complex activity. CDK4 activity is either inhibited or enhanced depending on stoichiometry of complex. The non-tyrosine-phosphorylated form of CDKN1B prevents T-loop phosphorylation of CDK4 producing inactive CDK4. Interacts (unphosphorylated form) with CDK2. Also forms ternary complexes with CDKN1A or CDKN2A. Interacts directly with CDKN1A (via its N-terminal); the interaction promotes the assembly of the cyclin D-CDK4 complex, its nuclear translocation and promotes the cyclin D-dependent enzyme activity of CDK4. Interacts with CCND1; the interaction is prevented with the binding of CCND1 to INSM1 during cell cycle progression. Probably forms a complex composed of chaperones HSP90 and HSP70, co-chaperones CDC37, PPP5C, TSC1 and client protein TSC2, CDK4, AKT, RAF1 and NR3C1; this complex does not contain co-chaperones STIP1/HOP and PTGES3/p23. Interacts with CEBPA (when phosphorylated). Interacts with FNIP1 and FNIP2. Phosphorylation at Thr-172 is required for enzymatic activity. Phosphorylated, in vitro, at this site by CCNH-CDK7, but, in vivo, appears to be phosphorylated by a proline-directed kinase. In the cyclin D-CDK4-CDKN1B complex, this phosphorylation and consequent CDK4 enzyme activity, is dependent on the tyrosine phosphorylation state of CDKN1B. Thus, in proliferating cells, CDK4 within the complex is phosphorylated on Thr-172 in the T-loop. In resting cells, phosphorylation on Thr-172 is prevented by the non-tyrosine-phosphorylated form of CDKN1B.

The protein localises to the cytoplasm. The protein resides in the nucleus. It is found in the nucleus membrane. It catalyses the reaction L-seryl-[protein] + ATP = O-phospho-L-seryl-[protein] + ADP + H(+). The enzyme catalyses L-threonyl-[protein] + ATP = O-phospho-L-threonyl-[protein] + ADP + H(+). Its activity is regulated as follows. Both phosphorylation at Thr-172 and binding of a D-type cyclin are necessary for enzymatic activity. Full activation of the cyclin-D-CDK4 complex appears to require other factors such as recruitment of the substrate via a substrate recruitment motif, and/or formation of the CDKN1B ternary complex. Inhibited by INK4 family members. In resting cells, the non-tyrosine-phosphorylated form of CDKN1B prevents phosphorylation at Thr-172 and inactivation, while, in proliferating cells, tyrosine phosphorylation of CDKN1B allows phosphorylation of Thr-172 of CDK4 and subsequent activation. Its function is as follows. Ser/Thr-kinase component of cyclin D-CDK4 (DC) complexes that phosphorylate and inhibit members of the retinoblastoma (RB) protein family including RB1 and regulate the cell-cycle during G(1)/S transition. Phosphorylation of RB1 allows dissociation of the transcription factor E2F from the RB/E2F complexes and the subsequent transcription of E2F target genes which are responsible for the progression through the G(1) phase. Hypophosphorylates RB1 in early G(1) phase. Cyclin D-CDK4 complexes are major integrators of various mitogenenic and antimitogenic signals. Also phosphorylates SMAD3 in a cell-cycle-dependent manner and represses its transcriptional activity. Component of the ternary complex, cyclin D/CDK4/CDKN1B, required for nuclear translocation and activity of the cyclin D-CDK4 complex. This Bos taurus (Bovine) protein is Cyclin-dependent kinase 4 (CDK4).